A 270-amino-acid polypeptide reads, in one-letter code: MEGPLTIPVLDKGFVRLVDQMGDDRAIVQAARVSYGEGTKTVREDAALIDYLMRHRHTSPFEMVVFKFHVKAPIFVARQWFRHRTASVNEISGRYSILKEEFYEPEAFRKQAKRNKQASEGALLDEEALALLRKVEQEAYGAYRALLEKGVAREMARMVLPLNLYTEFYWKQDLHNLFHFLKLRLAPEAQWEIRQYARAIAEIVKERVPLAWAAFEEHLLEGAFLSRTELRALRGLLTPEVYEKALSSLGLGGSRLKEALEKVFGPGEAL.

A ThyX domain is found at 13–218 (GFVRLVDQMG…PLAWAAFEEH (206 aa)). Residues serine 59, 82 to 84 (RHR), and glutamate 90 contribute to the FAD site. Residues 79-82 (QWFR), 90-94 (EISGR), and arginine 157 contribute to the dUMP site. Residues 82-92 (RHRTASVNEIS) carry the ThyX motif motif. FAD is bound by residues 173-175 (DLH) and histidine 179. Arginine 184 is a dUMP binding site. Arginine 184 (involved in ionization of N3 of dUMP, leading to its activation) is an active-site residue.

It belongs to the thymidylate synthase ThyX family. As to quaternary structure, homotetramer. FAD is required as a cofactor.

It carries out the reaction dUMP + (6R)-5,10-methylene-5,6,7,8-tetrahydrofolate + NADPH + H(+) = dTMP + (6S)-5,6,7,8-tetrahydrofolate + NADP(+). The protein operates within pyrimidine metabolism; dTTP biosynthesis. Its function is as follows. Catalyzes the reductive methylation of 2'-deoxyuridine-5'-monophosphate (dUMP) to 2'-deoxythymidine-5'-monophosphate (dTMP) while utilizing 5,10-methylenetetrahydrofolate (mTHF) as the methyl donor, and NADPH and FADH(2) as the reductant. The protein is Flavin-dependent thymidylate synthase of Thermus thermophilus (strain ATCC BAA-163 / DSM 7039 / HB27).